The primary structure comprises 282 residues: 2-dehydro-3-deoxyphosphooctonate aldolase (282 aa).

The protein belongs to the KdsA family.

It is found in the cytoplasm. It carries out the reaction D-arabinose 5-phosphate + phosphoenolpyruvate + H2O = 3-deoxy-alpha-D-manno-2-octulosonate-8-phosphate + phosphate. The protein operates within carbohydrate biosynthesis; 3-deoxy-D-manno-octulosonate biosynthesis; 3-deoxy-D-manno-octulosonate from D-ribulose 5-phosphate: step 2/3. It functions in the pathway bacterial outer membrane biogenesis; lipopolysaccharide biosynthesis. The sequence is that of 2-dehydro-3-deoxyphosphooctonate aldolase from Shewanella baltica (strain OS185).